The primary structure comprises 269 residues: 4-hydroxy-tetrahydrodipicolinate reductase (269 aa).

Residues 9–14 (GCAGKM), aspartate 35, 102–104 (GTT), and 128–131 (APNF) each bind NAD(+). Histidine 158 acts as the Proton donor/acceptor in catalysis. Histidine 159 provides a ligand contact to (S)-2,3,4,5-tetrahydrodipicolinate. The active-site Proton donor is the lysine 162. 168–169 (GT) is a binding site for (S)-2,3,4,5-tetrahydrodipicolinate.

It belongs to the DapB family.

Its subcellular location is the cytoplasm. The enzyme catalyses (S)-2,3,4,5-tetrahydrodipicolinate + NAD(+) + H2O = (2S,4S)-4-hydroxy-2,3,4,5-tetrahydrodipicolinate + NADH + H(+). It carries out the reaction (S)-2,3,4,5-tetrahydrodipicolinate + NADP(+) + H2O = (2S,4S)-4-hydroxy-2,3,4,5-tetrahydrodipicolinate + NADPH + H(+). The protein operates within amino-acid biosynthesis; L-lysine biosynthesis via DAP pathway; (S)-tetrahydrodipicolinate from L-aspartate: step 4/4. Catalyzes the conversion of 4-hydroxy-tetrahydrodipicolinate (HTPA) to tetrahydrodipicolinate. The polypeptide is 4-hydroxy-tetrahydrodipicolinate reductase (Gloeobacter violaceus (strain ATCC 29082 / PCC 7421)).